The following is a 517-amino-acid chain: Transcription factor MTB3 (517 aa).

The interval 290-331 (GNSSNGYRSDEGEGKLYKEELDERKPRKRGRKPANGREEALN) is disordered. The segment covering 297-314 (RSDEGEGKLYKEELDERK) has biased composition (basic and acidic residues). Residues 327–340 (EEALNHVEAERQRR) are basic motif; degenerate. A bHLH domain is found at 327-376 (EEALNHVEAERQRREKLNQRFYALRAVVPNISKMDKASLLGDAIAYITDL). The tract at residues 341–376 (EKLNQRFYALRAVVPNISKMDKASLLGDAIAYITDL) is helix-loop-helix motif.

It is found in the nucleus. Transcription factor that negatively regulates jasmonate (JA) signaling. Negatively regulates JA-dependent response to wounding, JA-induced expression of defense genes, JA-dependent responses against herbivorous insects, and JA-dependent resistance against Botrytis cinerea infection. Plays a positive role in resistance against the bacterial pathogen Pseudomonas syringae pv tomato DC3000. This chain is Transcription factor MTB3, found in Solanum lycopersicum (Tomato).